Reading from the N-terminus, the 181-residue chain is Protein Syd (181 aa).

The protein belongs to the Syd family.

The protein localises to the cell inner membrane. Interacts with the SecY protein in vivo. May bind preferentially to an uncomplexed state of SecY, thus functioning either as a chelating agent for excess SecY in the cell or as a regulatory factor that negatively controls the translocase function. This Shigella dysenteriae serotype 1 (strain Sd197) protein is Protein Syd.